The following is a 95-amino-acid chain: uncharacterized protein (95 aa).

Residues 1–24 (MKKLATLTALAGALTMAVATAAQA) constitute a signal peptide (or 21). Over residues 55 to 89 (EGKCGADKAKSAEGKCGEGKCGADKAKSAEGKCGE) the composition is skewed to basic and acidic residues. The segment at 55–95 (EGKCGADKAKSAEGKCGEGKCGADKAKSAEGKCGEGKCGSK) is disordered.

This is an uncharacterized protein from Haemophilus influenzae (strain ATCC 51907 / DSM 11121 / KW20 / Rd).